Here is a 473-residue protein sequence, read N- to C-terminus: Photosystem II CP43 reaction center protein (473 aa).

Residues 1–14 (MKTLYSPRRYYPVE) constitute a propeptide that is removed on maturation. N-acetylthreonine is present on T15. Position 15 is a phosphothreonine (T15). Helical transmembrane passes span 69–93 (LFEVAHFVPEKPMYEQGLILLPHLA), 134–155 (IIGPETLEESFPFFGYVWKDKN), 178–200 (KAVWFGGVYDTWAPGGGDVRVIT), 255–275 (KPFAWARRAFVWSGEAYLSYS), and 291–312 (WFNNTAYPSEFYGPTGPEASQA). E367 is a binding site for [CaMn4O5] cluster. Residues 447–471 (RARAAAAGFEKGIERETEPVLFMSP) traverse the membrane as a helical segment.

The protein belongs to the PsbB/PsbC family. PsbC subfamily. PSII is composed of 1 copy each of membrane proteins PsbA, PsbB, PsbC, PsbD, PsbE, PsbF, PsbH, PsbI, PsbJ, PsbK, PsbL, PsbM, PsbT, PsbX, PsbY, PsbZ, Psb30/Ycf12, at least 3 peripheral proteins of the oxygen-evolving complex and a large number of cofactors. It forms dimeric complexes. Requires Binds multiple chlorophylls and provides some of the ligands for the Ca-4Mn-5O cluster of the oxygen-evolving complex. It may also provide a ligand for a Cl- that is required for oxygen evolution. PSII binds additional chlorophylls, carotenoids and specific lipids. as cofactor.

The protein resides in the plastid. It localises to the chloroplast thylakoid membrane. In terms of biological role, one of the components of the core complex of photosystem II (PSII). It binds chlorophyll and helps catalyze the primary light-induced photochemical processes of PSII. PSII is a light-driven water:plastoquinone oxidoreductase, using light energy to abstract electrons from H(2)O, generating O(2) and a proton gradient subsequently used for ATP formation. The sequence is that of Photosystem II CP43 reaction center protein from Chaetosphaeridium globosum (Charophycean green alga).